Consider the following 402-residue polypeptide: Hyaluronan and proteoglycan link protein 4 (402 aa).

An N-terminal signal peptide occupies residues 1–29 (MVCARAALGPGALWAAAWGVLLLTAPAGA). The Ig-like C2-type domain occupies 46–161 (SVVVQTAPGQ…DAGMVKLDLE (116 aa)). 5 disulfide bridges follow: C68–C143, C185–C266, C209–C230, C293–C363, and C318–C339. An N-linked (GlcNAc...) asparagine glycan is attached at N132. 2 Link domains span residues 163-268 (VVFP…FCFT) and 273-365 (GRVF…YCYR).

It belongs to the HAPLN family. In terms of tissue distribution, expressed predominantly in brain.

The protein localises to the secreted. The protein resides in the extracellular space. It localises to the extracellular matrix. Its function is as follows. Essential for the proper localization of brevican (BCAN), mainly as a perineuronal nets (PNNs)-type deposition in the brainstem and cerebellum thereby playing a key role in the formation and structural organization of PNNs. Contributes to the formation and transmission of inhibitory GABAergic synapses between Purkinje cells and deep cerebellar nuclei neurons. This is Hyaluronan and proteoglycan link protein 4 (HAPLN4) from Homo sapiens (Human).